Here is a 303-residue protein sequence, read N- to C-terminus: Quinolinate synthase (303 aa).

Residues His-24 and Ser-41 each coordinate iminosuccinate. Cys-86 is a binding site for [4Fe-4S] cluster. Iminosuccinate is bound by residues 112 to 114 (YIN) and Ser-129. [4Fe-4S] cluster is bound at residue Cys-172. Iminosuccinate contacts are provided by residues 198-200 (HPE) and Thr-215. [4Fe-4S] cluster is bound at residue Cys-260.

The protein belongs to the quinolinate synthase family. Type 2 subfamily. [4Fe-4S] cluster is required as a cofactor.

It localises to the cytoplasm. It carries out the reaction iminosuccinate + dihydroxyacetone phosphate = quinolinate + phosphate + 2 H2O + H(+). It functions in the pathway cofactor biosynthesis; NAD(+) biosynthesis; quinolinate from iminoaspartate: step 1/1. Its function is as follows. Catalyzes the condensation of iminoaspartate with dihydroxyacetone phosphate to form quinolinate. This is Quinolinate synthase from Caldicellulosiruptor bescii (strain ATCC BAA-1888 / DSM 6725 / KCTC 15123 / Z-1320) (Anaerocellum thermophilum).